The following is a 205-amino-acid chain: ATP-dependent dethiobiotin synthetase BioD (205 aa).

T16 contacts Mg(2+). The active site involves K32. T36 contributes to the substrate binding site. Mg(2+) is bound at residue E97. 97–100 (EGAG) provides a ligand contact to ATP.

It belongs to the dethiobiotin synthetase family. Homodimer. Requires Mg(2+) as cofactor.

It is found in the cytoplasm. It catalyses the reaction (7R,8S)-7,8-diammoniononanoate + CO2 + ATP = (4R,5S)-dethiobiotin + ADP + phosphate + 3 H(+). It functions in the pathway cofactor biosynthesis; biotin biosynthesis; biotin from 7,8-diaminononanoate: step 1/2. Functionally, catalyzes a mechanistically unusual reaction, the ATP-dependent insertion of CO2 between the N7 and N8 nitrogen atoms of 7,8-diaminopelargonic acid (DAPA, also called 7,8-diammoniononanoate) to form a ureido ring. The protein is ATP-dependent dethiobiotin synthetase BioD of Paramagnetospirillum magneticum (strain ATCC 700264 / AMB-1) (Magnetospirillum magneticum).